Here is a 264-residue protein sequence, read N- to C-terminus: MVWLPRVPCVAAVILLLTVLSPPMALVRDSRPWFLEYCKSECHFYNGTQRVRLLERYFYNLEENLRFDSDVGEFHAVTELGRPDAENWNSQPEFLEQKRAEVDTVCRHNYEISDKFLVRRRVEPTVTVYPTKTQPLEHHNLLVCSVSDFYPGNIEVRWFRNGKEEKTGIVSTGLVRNGDWTFQTLVMLETVPQSGEVYTCQVEHPSLTDPVTVEWKAQSTSAQNKMLSGVGGFVLGLLFLGAGLFIYFRNQKGQSGLQPTGLLS.

The signal sequence occupies residues 1 to 26; that stretch reads MVWLPRVPCVAAVILLLTVLSPPMAL. The beta-1 stretch occupies residues 27-121; the sequence is VRDSRPWFLE…ISDKFLVRRR (95 aa). The Extracellular portion of the chain corresponds to 27–225; the sequence is VRDSRPWFLE…KAQSTSAQNK (199 aa). Intrachain disulfides connect C38–C106 and C144–C200. N46 is a glycosylation site (N-linked (GlcNAc...) asparagine). Residues 122-225 form a beta-2 region; it reads VEPTVTVYPT…KAQSTSAQNK (104 aa). Positions 124 to 214 constitute an Ig-like C1-type domain; the sequence is PTVTVYPTKT…PSLTDPVTVE (91 aa). Residues 226 to 246 form a helical membrane-spanning segment; the sequence is MLSGVGGFVLGLLFLGAGLFI. The Cytoplasmic portion of the chain corresponds to 247-264; the sequence is YFRNQKGQSGLQPTGLLS.

It belongs to the MHC class II family. Post-translationally, ubiquitinated in immature dendritic cells leading to down-regulation of MHC class II.

The protein localises to the membrane. This is H-2 class II histocompatibility antigen, E-B beta chain (H2-Eb1) from Mus musculus (Mouse).